Here is a 196-residue protein sequence, read N- to C-terminus: Phosphoheptose isomerase (196 aa).

The region spanning 31–196 (VARQFKAGNK…KAGLEAQIAV (166 aa)) is the SIS domain. A substrate-binding site is contributed by 46–48 (NGG). Zn(2+) is bound by residues H55 and E59. Residues E59, 88-89 (ND), 114-116 (STS), S119, and Q166 contribute to the substrate site. Q166 and H174 together coordinate Zn(2+).

Belongs to the SIS family. GmhA subfamily. The cofactor is Zn(2+).

The protein resides in the cytoplasm. It catalyses the reaction 2 D-sedoheptulose 7-phosphate = D-glycero-alpha-D-manno-heptose 7-phosphate + D-glycero-beta-D-manno-heptose 7-phosphate. The protein operates within carbohydrate biosynthesis; D-glycero-D-manno-heptose 7-phosphate biosynthesis; D-glycero-alpha-D-manno-heptose 7-phosphate and D-glycero-beta-D-manno-heptose 7-phosphate from sedoheptulose 7-phosphate: step 1/1. In terms of biological role, catalyzes the isomerization of sedoheptulose 7-phosphate in D-glycero-D-manno-heptose 7-phosphate. In Crocosphaera subtropica (strain ATCC 51142 / BH68) (Cyanothece sp. (strain ATCC 51142)), this protein is Phosphoheptose isomerase.